Consider the following 574-residue polypeptide: MRTSQYILATLKETPSDAEIVSHQLMLRAGMIRRVASGLYTWLPTGLRVLRKVENIVREEMNKANAIEMLMPVIQPADLWEESGRWDEFGPELMRFTDRHNRTFALGPTHEEVITDFVRKEISSYKQLPISLYQIQTKVRDERRPRFGVMRAREFTMKDAYSFHLSDECLDATYQVMHKAYCNIFERLNLDYRPVIADTGSIGGSVSHEFHVLAESGEDAIAFSDGSDYAANIEKAEALAPSEPRPAATKELKAFPTPDAKTINELKKHYGVKPHRGVKTLIVYAAPDENGVRGLVALVLRGDHDLNELKAEKHPLVDSPLEMATEADIVAAIGAKPGSLGPVGLSMPIIVDRSANILADFVAGANKDDEHYSGINWDRDVTDYEVADIRNIVEGDASPCGQGTLQIKRGIEVGHIFQLGTKYSQAMKAGVLNESGKNQIMTMGCYGIGVSRIVAAAIEQNNDQYGIIWPQPIAPFDLAIVPMNMHKSHRIPDIATNLYQGLKDAGLDVLFDDRKERPGVMFNDMELIGVPFTLVIGERNLDENKVELKNRRTGEKLMIDIDTAIDAIKAAVKG.

The protein belongs to the class-II aminoacyl-tRNA synthetase family. ProS type 1 subfamily. Homodimer.

The protein localises to the cytoplasm. The catalysed reaction is tRNA(Pro) + L-proline + ATP = L-prolyl-tRNA(Pro) + AMP + diphosphate. Functionally, catalyzes the attachment of proline to tRNA(Pro) in a two-step reaction: proline is first activated by ATP to form Pro-AMP and then transferred to the acceptor end of tRNA(Pro). As ProRS can inadvertently accommodate and process non-cognate amino acids such as alanine and cysteine, to avoid such errors it has two additional distinct editing activities against alanine. One activity is designated as 'pretransfer' editing and involves the tRNA(Pro)-independent hydrolysis of activated Ala-AMP. The other activity is designated 'posttransfer' editing and involves deacylation of mischarged Ala-tRNA(Pro). The misacylated Cys-tRNA(Pro) is not edited by ProRS. The sequence is that of Proline--tRNA ligase from Pseudoalteromonas translucida (strain TAC 125).